The sequence spans 106 residues: Putative defensin-like protein 224 (106 aa).

Positions 1–23 (MKTLSLFFTLVILISSCVSNLMA) are cleaved as a signal peptide. 3 cysteine pairs are disulfide-bonded: C60–C78, C64–C84, and C68–C86.

This sequence belongs to the DEFL family.

The protein localises to the secreted. The protein is Putative defensin-like protein 224 of Arabidopsis thaliana (Mouse-ear cress).